The chain runs to 458 residues: Argininosuccinate lyase (458 aa).

This sequence belongs to the lyase 1 family. Argininosuccinate lyase subfamily.

It localises to the cytoplasm. It catalyses the reaction 2-(N(omega)-L-arginino)succinate = fumarate + L-arginine. The protein operates within amino-acid biosynthesis; L-arginine biosynthesis; L-arginine from L-ornithine and carbamoyl phosphate: step 3/3. In Actinobacillus pleuropneumoniae serotype 3 (strain JL03), this protein is Argininosuccinate lyase.